A 476-amino-acid polypeptide reads, in one-letter code: Cys-Gly metallodipeptidase dug1 (476 aa).

Residue His-99 participates in Zn(2+) binding. Asp-101 is an active-site residue. Residue Asp-133 coordinates Zn(2+). Catalysis depends on Glu-167, which acts as the Proton acceptor. Residues Glu-168, Asp-196, and His-446 each coordinate Zn(2+).

The protein belongs to the peptidase M20A family. As to quaternary structure, homodimer. Component of the GSH degradosomal complex. Zn(2+) serves as cofactor. Mn(2+) is required as a cofactor.

The protein localises to the cytoplasm. Catalytic component of the GSH degradosomal complex involved in the degradation of glutathione (GSH) and other peptides containing a gamma-glu-X bond. Has a Gly-Cys dipeptidase activity. The sequence is that of Cys-Gly metallodipeptidase dug1 (dug1) from Schizosaccharomyces pombe (strain 972 / ATCC 24843) (Fission yeast).